A 345-amino-acid polypeptide reads, in one-letter code: N-acetyl-gamma-glutamyl-phosphate reductase (345 aa).

Residue Cys-149 is part of the active site.

It belongs to the NAGSA dehydrogenase family. Type 1 subfamily.

Its subcellular location is the cytoplasm. It carries out the reaction N-acetyl-L-glutamate 5-semialdehyde + phosphate + NADP(+) = N-acetyl-L-glutamyl 5-phosphate + NADPH + H(+). The protein operates within amino-acid biosynthesis; L-arginine biosynthesis; N(2)-acetyl-L-ornithine from L-glutamate: step 3/4. Catalyzes the NADPH-dependent reduction of N-acetyl-5-glutamyl phosphate to yield N-acetyl-L-glutamate 5-semialdehyde. In Janthinobacterium sp. (strain Marseille) (Minibacterium massiliensis), this protein is N-acetyl-gamma-glutamyl-phosphate reductase.